A 728-amino-acid polypeptide reads, in one-letter code: Ophiobolin F synthase oblA (728 aa).

The segment at Met1–Glu322 is (7Z)-ophiobola-7,19-dien-3-ol synthase. Mg(2+)-binding residues include Asp93 and Asp97. Asp93 is a substrate binding site. Positions Asp93–Asp97 match the DDXXD 1 motif. Substrate-binding positions include Arg182–Asp185, Asn226, Ser230–Glu234, and Arg313–Tyr314. The short motif at Asn226–Glu234 is the NSE/DTE element. Positions Leu323–Val728 are geranylfarnesyl diphosphate synthase. Positions Gly362 to Gly371 are enriched in low complexity. The segment at Gly362–Pro394 is disordered. Residues Lys439, Arg442, and His471 each contribute to the isopentenyl diphosphate site. Mg(2+) is bound by residues Asp478 and Asp482. The short motif at Asp478–Asp482 is the DDXXD 2 element. Dimethylallyl diphosphate is bound at residue Arg487. Arg488 contributes to the isopentenyl diphosphate binding site. Dimethylallyl diphosphate contacts are provided by Lys565, Thr566, Gln604, Asn611, Lys621, and Lys631.

In the N-terminal section; belongs to the terpene synthase family. It in the C-terminal section; belongs to the FPP/GGPP synthase family. It depends on Mg(2+) as a cofactor.

It catalyses the reaction isopentenyl diphosphate + (2E,6E)-farnesyl diphosphate = (2E,6E,10E)-geranylgeranyl diphosphate + diphosphate. The enzyme catalyses isopentenyl diphosphate + (2E,6E,10E)-geranylgeranyl diphosphate = (2E,6E,10E,14E)-geranylfarnesyl diphosphate + diphosphate. The catalysed reaction is (2E,6E,10E,14E)-geranylfarnesyl diphosphate + H2O = ophiobolin F + diphosphate. Its pathway is secondary metabolite biosynthesis; terpenoid biosynthesis. Functionally, bifunctional sesterterpene synthase; part of the gene cluster that mediates the biosynthesis of the sesterterpenes ophiobolins, fungal phytotoxins with potential anti-cancer activities. The first step of the pathway is performed by the sesterterpene synthase oblA that possesses both prenyl transferase and terpene cyclase activity, converting isopentenyl diphosphate and dimethylallyl diphosphate into geranylfarnesyl diphosphate (GFPP) and further converting GFPP into ophiobolin F, respectively. Other sesterterpenoids (C(25) terpenoids) are found as minor products of oblA. The cytochrome P450 monooxygenase oblB then catalyzes a four-step oxidative transformation of ophiobolin F to yield ophiobolin C. The function of the cytochrome P450 monooxygenase oblE has still to be determined. In Emericella variicolor (Aspergillus stellatus), this protein is Ophiobolin F synthase oblA.